The following is a 441-amino-acid chain: Probable xylan O-acetyltransferase 10 (441 aa).

Residues 1-19 (MMKPQHGGMAGHGGGRTRS) lie on the Cytoplasmic side of the membrane. Residues 20 to 40 (PFLTSYALTLAFITFVSVLYF) traverse the membrane as a helical; Signal-anchor for type II membrane protein segment. At 41–441 (KDFSSTLHQP…ELLYSKLFFP (401 aa)) the chain is on the lumenal side. The segment at 50–81 (PFLTRPPPHRRQIARPRAPSHHHGGGSSSGGG) is disordered. Residues 56 to 73 (PPHRRQIARPRAPSHHHG) are compositionally biased toward basic residues. 4 disulfides stabilise this stretch: C97–C148, C119–C184, C128–C422, and C341–C418. N-linked (GlcNAc...) asparagine glycosylation is present at N154. A GDS motif motif is present at residues 171–173 (GDS). The active-site Nucleophile is S173. Residues N212, N343, and N381 are each glycosylated (N-linked (GlcNAc...) asparagine). The Proton donor role is filled by D417. The short motif at 417 to 420 (DCTH) is the DXXH motif element. The Proton acceptor role is filled by H420.

The protein belongs to the PC-esterase family. TBL subfamily. As to expression, expressed in roots, leaves and stems.

The protein localises to the golgi apparatus membrane. Its function is as follows. Probable xylan acetyltransferase required for 2-O- and 3-O-monoacetylation of xylosyl residues in xylan. Possesses extremely low activity in vitro. This Oryza sativa subsp. japonica (Rice) protein is Probable xylan O-acetyltransferase 10.